We begin with the raw amino-acid sequence, 90 residues long: UPF0184 protein (90 aa).

Residues 16–78 (DETKEEMVEL…QSLETEQNTE (63 aa)) adopt a coiled-coil conformation. Residues 57–90 (SQQARQELQAERQSLETEQNTEPSTKSDQEQKKQ) are disordered. A compositionally biased stretch (basic and acidic residues) spans 81 to 90 (TKSDQEQKKQ).

This sequence belongs to the UPF0184 (EST00098) family.

The chain is UPF0184 protein from Branchiostoma floridae (Florida lancelet).